The sequence spans 347 residues: Globoside alpha-1,3-N-acetylgalactosaminyltransferase 1 (347 aa).

Topologically, residues 1 to 5 are cytoplasmic; that stretch reads MHRRR. Residues 6–26 traverse the membrane as a helical; Signal-anchor for type II membrane protein segment; that stretch reads LALGLGFCLLAGTSLSVLWVY. At 27–347 the chain is on the lumenal side; the sequence is LENWLPVSYV…LDKDISCLRS (321 aa). Asn-108 carries N-linked (GlcNAc...) asparagine glycosylation. Substrate contacts are provided by residues 116–121, 206–208, and 228–231; these read FAVGKY, DVD, and HPSY. Mn(2+)-binding residues include Asp-206 and Asp-208. The Nucleophile role is filled by Glu-298.

This sequence belongs to the glycosyltransferase 6 family. It depends on Mn(2+) as a cofactor. Widely expressed. Expressed at higher level in placenta, ovary and peripheral blood leukocyte, whereas it is weakly expressed in liver, thymus, and testis. Expressed in bone marrow erythroid cells.

The protein localises to the golgi apparatus membrane. Its pathway is protein modification; protein glycosylation. Has lost the ability to synthesize Forssman glycolipid antigen (FORS1/FG). Might have acquired an alternative function in glycosphingolipid metabolism, but it remains to be established. It appears to have drifted more slowly than confirmed pseudogenes in the glycosyltransferase 6 family, suggesting that it has remained under evolutionary pressure. The chain is Globoside alpha-1,3-N-acetylgalactosaminyltransferase 1 from Homo sapiens (Human).